Consider the following 357-residue polypeptide: MKQETTVLVGISGGVDSAVAACMLVDEGYRVIGLNIKVLDSPESNPALQPSSLVISNREEFRIPVYTLNLSKRFREDVIGYFQEEYLAARTPNPCIVCNKKIKWAGLLEAADMLNADLVATGHYASTAFLGGRCRLYQGADKKKDQSYFLWMLQQKELLKTILPLGTLAKPEVRELARSYGVPAAEKKESQEICFVPGDDYCRYLEQAIPDLAERVRGGELVDASGRVIGHHRGYPFYTIGQRRGLGASTGEPIYVTSIDPVHNRIHTGKKTDLLSRELTASGMNWIGIEPPKKPFEATARIRYRDAPTPCRVTPLEDNRATISFHSPKSAITRGQAAVIYRDDEVLGGGSIVETTQ.

ATP is bound by residues 10-17 (GISGGVDS) and Ile36. Cys98 acts as the Nucleophile in catalysis. Cys98 and Cys194 are disulfide-bonded. ATP is bound at residue Gly122. An interaction with tRNA region spans residues 144-146 (KDQ). Cys194 functions as the Cysteine persulfide intermediate in the catalytic mechanism. The interval 303–304 (RY) is interaction with tRNA.

This sequence belongs to the MnmA/TRMU family.

Its subcellular location is the cytoplasm. It carries out the reaction S-sulfanyl-L-cysteinyl-[protein] + uridine(34) in tRNA + AH2 + ATP = 2-thiouridine(34) in tRNA + L-cysteinyl-[protein] + A + AMP + diphosphate + H(+). In terms of biological role, catalyzes the 2-thiolation of uridine at the wobble position (U34) of tRNA, leading to the formation of s(2)U34. In Chlorobium phaeovibrioides (strain DSM 265 / 1930) (Prosthecochloris vibrioformis (strain DSM 265)), this protein is tRNA-specific 2-thiouridylase MnmA.